A 127-amino-acid polypeptide reads, in one-letter code: Tyrosine-protein phosphatase 2 (127 aa).

Residues 1-127 form the Tyrosine-protein phosphatase domain; it reads QGSKVIVMVT…PRDCEAPILV (127 aa). Positions 63 to 81 are enriched in acidic residues; that stretch reads VYDNDDGTEQNDEQTEEEP. Residues 63-82 are disordered; that stretch reads VYDNDDGTEQNDEQTEEEPE.

Belongs to the protein-tyrosine phosphatase family.

It catalyses the reaction O-phospho-L-tyrosyl-[protein] + H2O = L-tyrosyl-[protein] + phosphate. This Styela plicata (Wrinkled sea squirt) protein is Tyrosine-protein phosphatase 2 (STY-2).